The following is a 248-amino-acid chain: 2,3-bisphosphoglycerate-dependent phosphoglycerate mutase (248 aa).

Residues 8 to 15 (RHGESAWN), 21 to 22 (TG), Arg-60, 87 to 90 (EKHY), Lys-98, 114 to 115 (RR), and 183 to 184 (GN) each bind substrate. Residue His-9 is the Tele-phosphohistidine intermediate of the active site. Residue Glu-87 is the Proton donor/acceptor of the active site.

The protein belongs to the phosphoglycerate mutase family. BPG-dependent PGAM subfamily.

The catalysed reaction is (2R)-2-phosphoglycerate = (2R)-3-phosphoglycerate. Its pathway is carbohydrate degradation; glycolysis; pyruvate from D-glyceraldehyde 3-phosphate: step 3/5. Its function is as follows. Catalyzes the interconversion of 2-phosphoglycerate and 3-phosphoglycerate. This chain is 2,3-bisphosphoglycerate-dependent phosphoglycerate mutase, found in Bacteroides fragilis (strain ATCC 25285 / DSM 2151 / CCUG 4856 / JCM 11019 / LMG 10263 / NCTC 9343 / Onslow / VPI 2553 / EN-2).